We begin with the raw amino-acid sequence, 124 residues long: MATINQLVRKPRVKQVVKSNVPALAACPQKRGVCTRVYTTTPKKPNSALRKVCRVRLTNGFEVTSYIGGEGHNLQEHSVVLIRGGRVKDLPGVRYHTVRGALDCAGVNGRKKGRSKYGVKRPKS.

A 3-methylthioaspartic acid modification is found at D89.

It belongs to the universal ribosomal protein uS12 family. As to quaternary structure, part of the 30S ribosomal subunit. Contacts proteins S8 and S17. May interact with IF1 in the 30S initiation complex.

With S4 and S5 plays an important role in translational accuracy. In terms of biological role, interacts with and stabilizes bases of the 16S rRNA that are involved in tRNA selection in the A site and with the mRNA backbone. Located at the interface of the 30S and 50S subunits, it traverses the body of the 30S subunit contacting proteins on the other side and probably holding the rRNA structure together. The combined cluster of proteins S8, S12 and S17 appears to hold together the shoulder and platform of the 30S subunit. The protein is Small ribosomal subunit protein uS12 of Photobacterium profundum (strain SS9).